Reading from the N-terminus, the 305-residue chain is Nucleotide-binding protein Mpe_A3336 (305 aa).

ATP is bound at residue G22–S29. GTP is bound at residue D74 to S77.

It belongs to the RapZ-like family.

In terms of biological role, displays ATPase and GTPase activities. This Methylibium petroleiphilum (strain ATCC BAA-1232 / LMG 22953 / PM1) protein is Nucleotide-binding protein Mpe_A3336.